We begin with the raw amino-acid sequence, 470 residues long: Zinc finger protein weckle (470 aa).

Residues 1–103 are required for homodimerization; the sequence is MGVPTSDWIY…DALRLEYGLP (103 aa). Positions 10 to 82 constitute a ZAD domain; that stretch reads YWCRLCARDD…SKVQAIFELL (73 aa). Positions 12, 15, 55, and 58 each coordinate Zn(2+). The tract at residues 156–265 is disordered; it reads NSDPKVLASP…LSMSPHGSQS (110 aa). S168 is subject to Phosphoserine. A compositionally biased stretch (acidic residues) spans 195–208; the sequence is ESDDEEAILDEDEA. The span at 214–225 shows a compositional bias: basic residues; it reads LKRKRGRPKGSG. Residues 237–254 show a composition bias toward basic and acidic residues; the sequence is TSREPDDNAKSKQDDKTS. Residues 255 to 265 show a composition bias toward polar residues; the sequence is ELSMSPHGSQS. 6 consecutive C2H2-type zinc fingers follow at residues 271–294, 300–322, 328–350, 355–377, 383–405, and 411–434; these read YPCKICNETFMSFMALRRHKHDMH, YVCDHCGKGLKTFTSLVEHQLVH, CICPVCNAGFKNKARLRVHSQTH, FECNVCGKKLQTRAILNKHKYVH, FKCEVCGSGCKNSTALKIHLLGH, and YVCKYCGKAFASNTNCRSHKWKKH.

Homodimer. Interacts with Myd88 and Toll.

The protein localises to the cell membrane. Functionally, acts as an adapter to assemble/stabilize a Toll/wek/Myd88/tube complex; required for efficient recruitment of Myd88 to Toll. Dispensable for innate immune response; plays a minimal role, if any, in the immune defense against Gram-positive bacteria and fungi. Involved in dorsoventral axis determination. This is Zinc finger protein weckle from Drosophila melanogaster (Fruit fly).